The sequence spans 211 residues: Uracil phosphoribosyltransferase (211 aa).

5-phospho-alpha-D-ribose 1-diphosphate-binding positions include arginine 79, arginine 104, and aspartate 131–serine 139. Uracil contacts are provided by residues isoleucine 196 and glycine 201–alanine 203. Aspartate 202 lines the 5-phospho-alpha-D-ribose 1-diphosphate pocket.

The protein belongs to the UPRTase family. The cofactor is Mg(2+).

It catalyses the reaction UMP + diphosphate = 5-phospho-alpha-D-ribose 1-diphosphate + uracil. Its pathway is pyrimidine metabolism; UMP biosynthesis via salvage pathway; UMP from uracil: step 1/1. Allosterically activated by GTP. Functionally, catalyzes the conversion of uracil and 5-phospho-alpha-D-ribose 1-diphosphate (PRPP) to UMP and diphosphate. This is Uracil phosphoribosyltransferase from Lactococcus lactis subsp. cremoris (strain MG1363).